Consider the following 150-residue polypeptide: Actin-depolymerizing factor 3 (150 aa).

Residues 7-150 form the ADF-H domain; the sequence is GVAVSEECKA…TLDVLKDHTS (144 aa).

Belongs to the actin-binding proteins ADF family.

In terms of biological role, actin-depolymerizing protein. Severs actin filaments (F-actin) and binds to actin monomers. In Oryza sativa subsp. japonica (Rice), this protein is Actin-depolymerizing factor 3 (ADF3).